A 361-amino-acid polypeptide reads, in one-letter code: Holliday junction branch migration complex subunit RuvB (361 aa).

The large ATPase domain (RuvB-L) stretch occupies residues Met1–Tyr181. ATP is bound by residues Leu20, Arg21, Gly62, Lys65, Thr66, Thr67, Glu128 to Tyr130, Arg171, Tyr181, and Arg218. Residue Thr66 coordinates Mg(2+). The segment at Thr182–Glu252 is small ATPAse domain (RuvB-S). The segment at His255 to Glu361 is head domain (RuvB-H). The DNA site is built by Arg291, Arg310, and Arg315.

It belongs to the RuvB family. Homohexamer. Forms an RuvA(8)-RuvB(12)-Holliday junction (HJ) complex. HJ DNA is sandwiched between 2 RuvA tetramers; dsDNA enters through RuvA and exits via RuvB. An RuvB hexamer assembles on each DNA strand where it exits the tetramer. Each RuvB hexamer is contacted by two RuvA subunits (via domain III) on 2 adjacent RuvB subunits; this complex drives branch migration. In the full resolvosome a probable DNA-RuvA(4)-RuvB(12)-RuvC(2) complex forms which resolves the HJ.

The protein localises to the cytoplasm. It catalyses the reaction ATP + H2O = ADP + phosphate + H(+). In terms of biological role, the RuvA-RuvB-RuvC complex processes Holliday junction (HJ) DNA during genetic recombination and DNA repair, while the RuvA-RuvB complex plays an important role in the rescue of blocked DNA replication forks via replication fork reversal (RFR). RuvA specifically binds to HJ cruciform DNA, conferring on it an open structure. The RuvB hexamer acts as an ATP-dependent pump, pulling dsDNA into and through the RuvAB complex. RuvB forms 2 homohexamers on either side of HJ DNA bound by 1 or 2 RuvA tetramers; 4 subunits per hexamer contact DNA at a time. Coordinated motions by a converter formed by DNA-disengaged RuvB subunits stimulates ATP hydrolysis and nucleotide exchange. Immobilization of the converter enables RuvB to convert the ATP-contained energy into a lever motion, pulling 2 nucleotides of DNA out of the RuvA tetramer per ATP hydrolyzed, thus driving DNA branch migration. The RuvB motors rotate together with the DNA substrate, which together with the progressing nucleotide cycle form the mechanistic basis for DNA recombination by continuous HJ branch migration. Branch migration allows RuvC to scan DNA until it finds its consensus sequence, where it cleaves and resolves cruciform DNA. The protein is Holliday junction branch migration complex subunit RuvB of Bartonella quintana (strain Toulouse) (Rochalimaea quintana).